A 186-amino-acid polypeptide reads, in one-letter code: uncharacterized protein (186 aa).

The segment at 156 to 186 is disordered; that stretch reads DTKELERTTQPPEHQKHHQEPREKRGMNKRD. The segment covering 173–186 has biased composition (basic and acidic residues); sequence HQEPREKRGMNKRD.

This is an uncharacterized protein from Bacillus subtilis (strain 168).